A 600-amino-acid chain; its full sequence is Nisin transport ATP-binding protein NisT (600 aa).

The next 5 membrane-spanning stretches (helical) occupy residues 34–54 (AIYL…SLFI), 69–89 (LINI…LGQL), 147–167 (AIIV…FIGT), 168–188 (WNIG…VLFL), and 260–280 (IFLD…MILS). An ABC transmembrane type-1 domain is found at 34 to 317 (AIYLIVLNAI…MIQNIYIIYN (284 aa)). In terms of domain architecture, ABC transporter spans 352–592 (VKVINLSYVY…CQYYQELYYS (241 aa)). Residue 386–393 (GKNGSGKS) coordinates ATP.

It belongs to the ABC transporter superfamily. Nisin exporter (TC 3.A.1.111.3) family.

Its subcellular location is the cell membrane. Functionally, probably implicated in the export process of the lantibiotic nisin. This chain is Nisin transport ATP-binding protein NisT (nisT), found in Lactococcus lactis subsp. lactis (Streptococcus lactis).